We begin with the raw amino-acid sequence, 306 residues long: Glutathione transport system permease protein GsiC (306 aa).

At 1-8 (MLNYVLKR) the chain is on the cytoplasmic side. A helical transmembrane segment spans residues 9-29 (LLGLIPTLLIVAVLVFLFVHL). Residues 30-102 (LPGDPARLIA…SRFLPTLWLT (73 aa)) are Periplasmic-facing. The 198-residue stretch at 95-292 (FLPTLWLTIT…LEFILINLVV (198 aa)) folds into the ABC transmembrane type-1 domain. A helical membrane pass occupies residues 103–123 (ITSMIWAVLFGMAIGIAAAVW). Over 124–134 (RNRWPDRLGMT) the chain is Cytoplasmic. The chain crosses the membrane as a helical span at residues 135 to 155 (LAVTGISFPAFALGMLLMQIF). The Periplasmic portion of the chain corresponds to 156–168 (SVDLGWLPTVGAD). The helical transmembrane segment at 169-189 (SWQHYILPSLTLGAAVASVMA) threads the bilayer. The Cytoplasmic portion of the chain corresponds to 190 to 228 (RFTRSSFVDVLSEDYMRTARAKGVSETWVVLKHGLRNAM). A helical transmembrane segment spans residues 229–249 (IPVVTMMGLQFGFLLGGSIVV). The Periplasmic portion of the chain corresponds to 250–278 (EKVFNWPGLGRLLVDSVDMRDYPVIQAEV). A helical transmembrane segment spans residues 279 to 299 (LLFSLEFILINLVVDVLYAAI). Over 300–306 (NPAIRYK) the chain is Cytoplasmic.

This sequence belongs to the binding-protein-dependent transport system permease family. In terms of assembly, the complex is composed of two ATP-binding proteins (GsiA), two transmembrane proteins (GsiC and GsiD) and a solute-binding protein (GsiB).

The protein resides in the cell inner membrane. In terms of biological role, part of the ABC transporter complex GsiABCD involved in glutathione import. Probably responsible for the translocation of the substrate across the membrane. The chain is Glutathione transport system permease protein GsiC from Salmonella paratyphi A (strain ATCC 9150 / SARB42).